The primary structure comprises 311 residues: Ribosomal RNA small subunit methyltransferase H (311 aa).

Residues 32–34 (AGH), Asp52, Phe79, Asp100, and Gln107 contribute to the S-adenosyl-L-methionine site.

It belongs to the methyltransferase superfamily. RsmH family.

Its subcellular location is the cytoplasm. It catalyses the reaction cytidine(1402) in 16S rRNA + S-adenosyl-L-methionine = N(4)-methylcytidine(1402) in 16S rRNA + S-adenosyl-L-homocysteine + H(+). Its function is as follows. Specifically methylates the N4 position of cytidine in position 1402 (C1402) of 16S rRNA. The sequence is that of Ribosomal RNA small subunit methyltransferase H from Staphylococcus aureus (strain bovine RF122 / ET3-1).